Here is a 144-residue protein sequence, read N- to C-terminus: Large ribosomal subunit protein uL11m (144 aa).

Residues 1–32 constitute a mitochondrion transit peptide; that stretch reads MASTRTTIIKLIVPAGKATPTPPIGPALGARG.

The protein belongs to the universal ribosomal protein uL11 family. As to quaternary structure, component of the mitochondrial large ribosomal subunit (mt-LSU). Mature yeast 74S mitochondrial ribosomes consist of a small (37S) and a large (54S) subunit. The 37S small subunit contains a 15S ribosomal RNA (15S mt-rRNA) and at least 32 different proteins. The 54S large subunit contains a 21S rRNA (21S mt-rRNA) and at least 45 different proteins.

The protein resides in the mitochondrion. It is found in the cytoplasm. Component of the mitochondrial ribosome (mitoribosome), a dedicated translation machinery responsible for the synthesis of mitochondrial genome-encoded proteins, including at least some of the essential transmembrane subunits of the mitochondrial respiratory chain. The mitoribosomes are attached to the mitochondrial inner membrane and translation products are cotranslationally integrated into the membrane. This chain is Large ribosomal subunit protein uL11m, found in Schizosaccharomyces pombe (strain 972 / ATCC 24843) (Fission yeast).